The sequence spans 117 residues: Immunoglobulin heavy variable 5-51 (117 aa).

An N-terminal signal peptide occupies residues methionine 1–alanine 19. The tract at residues glutamate 20 to serine 44 is framework-1. One can recognise an Ig-like domain in the interval glutamate 20–arginine 117. The cysteines at positions 41 and 115 are disulfide-linked. Residues glycine 45–tryptophan 52 form a complementarity-determining-1 region. Residues isoleucine 53–isoleucine 69 are framework-2. The interval isoleucine 70–threonine 77 is complementarity-determining-2. The segment at arginine 78–cysteine 115 is framework-3. Residues alanine 116–arginine 117 are complementarity-determining-3.

Immunoglobulins are composed of two identical heavy chains and two identical light chains; disulfide-linked.

Its subcellular location is the secreted. The protein localises to the cell membrane. V region of the variable domain of immunoglobulin heavy chains that participates in the antigen recognition. Immunoglobulins, also known as antibodies, are membrane-bound or secreted glycoproteins produced by B lymphocytes. In the recognition phase of humoral immunity, the membrane-bound immunoglobulins serve as receptors which, upon binding of a specific antigen, trigger the clonal expansion and differentiation of B lymphocytes into immunoglobulins-secreting plasma cells. Secreted immunoglobulins mediate the effector phase of humoral immunity, which results in the elimination of bound antigens. The antigen binding site is formed by the variable domain of one heavy chain, together with that of its associated light chain. Thus, each immunoglobulin has two antigen binding sites with remarkable affinity for a particular antigen. The variable domains are assembled by a process called V-(D)-J rearrangement and can then be subjected to somatic hypermutations which, after exposure to antigen and selection, allow affinity maturation for a particular antigen. The chain is Immunoglobulin heavy variable 5-51 from Homo sapiens (Human).